A 212-amino-acid chain; its full sequence is Large ribosomal subunit protein uL3 (212 aa).

The segment at 129-156 is disordered; it reads RRGPMGHGSKNHRAPGSTGAGTTPGRIY. The segment covering 142–153 has biased composition (low complexity); the sequence is APGSTGAGTTPG.

This sequence belongs to the universal ribosomal protein uL3 family. In terms of assembly, part of the 50S ribosomal subunit. Forms a cluster with proteins L14 and L19.

Its function is as follows. One of the primary rRNA binding proteins, it binds directly near the 3'-end of the 23S rRNA, where it nucleates assembly of the 50S subunit. The sequence is that of Large ribosomal subunit protein uL3 from Acaryochloris marina (strain MBIC 11017).